A 430-amino-acid polypeptide reads, in one-letter code: Sorting nexin-30 (430 aa).

The segment covering 1–18 (MSNGGTPRSLPSSGQKSI) has biased composition (polar residues). The segment at 1–66 (MSNGGTPRSL…SSPASSSSLL (66 aa)) is disordered. The span at 57–66 (SSPASSSSLL) shows a compositional bias: low complexity. The PX domain maps to 80–201 (RDLFVTVDDP…AFLSAKDLNK (122 aa)). Arg-123, Gln-125, Lys-153, and Arg-167 together coordinate a 1,2-diacyl-sn-glycero-3-phospho-(1D-myo-inositol-3-phosphate). A BAR domain is found at 223 to 428 (KLRGRPVEFA…LQDKQDAKGE (206 aa)).

The protein belongs to the sorting nexin family.

Its subcellular location is the early endosome membrane. Involved in the regulation of endocytosis and in several stages of intracellular trafficking. Together with snx4, involved in autophagosome assembly. The polypeptide is Sorting nexin-30 (snx30) (Danio rerio (Zebrafish)).